Consider the following 414-residue polypeptide: Serine hydroxymethyltransferase (414 aa).

(6S)-5,6,7,8-tetrahydrofolate contacts are provided by residues L121 and 125–127; that span reads GHL. K229 carries the post-translational modification N6-(pyridoxal phosphate)lysine.

The protein belongs to the SHMT family. Homodimer. It depends on pyridoxal 5'-phosphate as a cofactor.

The protein resides in the cytoplasm. The enzyme catalyses (6R)-5,10-methylene-5,6,7,8-tetrahydrofolate + glycine + H2O = (6S)-5,6,7,8-tetrahydrofolate + L-serine. Its pathway is one-carbon metabolism; tetrahydrofolate interconversion. It participates in amino-acid biosynthesis; glycine biosynthesis; glycine from L-serine: step 1/1. In terms of biological role, catalyzes the reversible interconversion of serine and glycine with tetrahydrofolate (THF) serving as the one-carbon carrier. This reaction serves as the major source of one-carbon groups required for the biosynthesis of purines, thymidylate, methionine, and other important biomolecules. Also exhibits THF-independent aldolase activity toward beta-hydroxyamino acids, producing glycine and aldehydes, via a retro-aldol mechanism. The sequence is that of Serine hydroxymethyltransferase from Polaromonas sp. (strain JS666 / ATCC BAA-500).